Reading from the N-terminus, the 1701-residue chain is DDB1- and CUL4-associated factor homolog 1 (1701 aa).

Residues 224–245 (HAEQSTSNGTSIPSIKITSVDG) show a composition bias toward polar residues. 3 disordered regions span residues 224 to 269 (HAEQ…RRTE), 883 to 906 (DRPASRSINTPILNKPLPSSGNNF), and 932 to 961 (RPSNAASLSSPAMATRSHSTDDDVFATPTL). The 33-residue stretch at 851-883 (NQAELLQLIHDHLLKSKLDSVAAMLKSEAKLPD) folds into the LisH domain. The span at 888-906 (RSINTPILNKPLPSSGNNF) shows a compositional bias: polar residues. WD repeat units lie at residues 1086-1125 (DHDESYTKATFSVDDEHLIVGLFNGEVHWINVDTGLDEGH), 1128-1169 (CHGS…QRVH), 1171-1210 (YREDSCVKFANTTMQRIVGTCRDKATVYDTETNHVLDTYL), and 1215-1252 (GLQYEKNYASFSPDDKLIFNDGLLWDVRKKNSAIHVFD). 2 consecutive short sequence motifs (DWD box) follow at residues 1237 to 1245 (LLWDVRKKN) and 1275 to 1282 (EVYDIRTF). 3 disordered regions span residues 1384–1559 (IGRL…DINL), 1566–1585 (EARVVENEGNNERPARPVDP), and 1641–1701 (LVRG…DDEA). 2 stretches are compositionally biased toward acidic residues: residues 1390–1423 (NEDENDEEEDEQREDHDEDEDSDESGDGDDDEEI) and 1451–1461 (DDNDTLDDLDF). Over residues 1468-1479 (IIRRQAQRRRQR) the composition is skewed to basic residues. 2 stretches are compositionally biased toward acidic residues: residues 1494–1512 (EGSDEDGDDDEDGEGDPDF) and 1520–1543 (DLVDAVDEEVDEDELGTDGDDDDS). The segment covering 1567–1581 (ARVVENEGNNERPAR) has biased composition (basic and acidic residues). Over residues 1667–1678 (DTDEYQSEEEEI) the composition is skewed to acidic residues.

It belongs to the VPRBP/DCAF1 family. As to quaternary structure, component of the cul4-rbx1-ddb1-dcaf1 E3 ubiquitin-protein ligase complex.

The protein localises to the nucleus. Its pathway is protein modification; protein ubiquitination. Its function is as follows. Component of the cul4-rbx1-ddb1-dcaf1 E3 ubiquitin-protein ligase complex, dcaf1 may function as the substrate recognition module within this complex. In Caenorhabditis elegans, this protein is DDB1- and CUL4-associated factor homolog 1 (dcaf-1).